We begin with the raw amino-acid sequence, 215 residues long: Fibroblast growth factor 17 (215 aa).

The signal sequence occupies residues 1-22 (MYGINQRYLYISFHFFVVWCHA). N137 carries an N-linked (GlcNAc...) asparagine glycan.

It belongs to the heparin-binding growth factors family.

It localises to the secreted. In terms of biological role, involved in dorsal-ventral embryonic patterning, by promoting expression of bone morphogenetic protein (BMP) antagonists such as chd. Also involved in anterior-posterior neural patterning and in mesoderm induction. The polypeptide is Fibroblast growth factor 17 (fgf17) (Danio rerio (Zebrafish)).